Consider the following 161-residue polypeptide: Nucleotide-binding protein Bcenmc03_2579 (161 aa).

Belongs to the YajQ family.

Nucleotide-binding protein. The sequence is that of Nucleotide-binding protein Bcenmc03_2579 from Burkholderia orbicola (strain MC0-3).